A 148-amino-acid chain; its full sequence is Urease accessory protein UreE (148 aa).

The protein belongs to the UreE family.

It is found in the cytoplasm. Its function is as follows. Involved in urease metallocenter assembly. Binds nickel. Probably functions as a nickel donor during metallocenter assembly. The polypeptide is Urease accessory protein UreE (Halalkalibacterium halodurans (strain ATCC BAA-125 / DSM 18197 / FERM 7344 / JCM 9153 / C-125) (Bacillus halodurans)).